The primary structure comprises 526 residues: Probable DNA ligase (526 aa).

Glutamate 228 lines the ATP pocket. Lysine 230 (N6-AMP-lysine intermediate) is an active-site residue. ATP-binding residues include arginine 235, arginine 250, glutamate 279, phenylalanine 319, arginine 391, and lysine 397.

The protein belongs to the ATP-dependent DNA ligase family. Mg(2+) serves as cofactor.

The catalysed reaction is ATP + (deoxyribonucleotide)n-3'-hydroxyl + 5'-phospho-(deoxyribonucleotide)m = (deoxyribonucleotide)n+m + AMP + diphosphate.. Functionally, DNA ligase that seals nicks in double-stranded DNA during DNA replication, DNA recombination and DNA repair. This is Probable DNA ligase from Mycobacterium avium (strain 104).